A 259-amino-acid chain; its full sequence is Deoxyribose-phosphate aldolase (259 aa).

The Proton donor/acceptor role is filled by Asp102. Residue Lys167 is the Schiff-base intermediate with acetaldehyde of the active site. Lys201 acts as the Proton donor/acceptor in catalysis.

Belongs to the DeoC/FbaB aldolase family. DeoC type 2 subfamily.

The protein resides in the cytoplasm. It carries out the reaction 2-deoxy-D-ribose 5-phosphate = D-glyceraldehyde 3-phosphate + acetaldehyde. Its pathway is carbohydrate degradation; 2-deoxy-D-ribose 1-phosphate degradation; D-glyceraldehyde 3-phosphate and acetaldehyde from 2-deoxy-alpha-D-ribose 1-phosphate: step 2/2. Functionally, catalyzes a reversible aldol reaction between acetaldehyde and D-glyceraldehyde 3-phosphate to generate 2-deoxy-D-ribose 5-phosphate. This Photorhabdus laumondii subsp. laumondii (strain DSM 15139 / CIP 105565 / TT01) (Photorhabdus luminescens subsp. laumondii) protein is Deoxyribose-phosphate aldolase.